The following is a 120-amino-acid chain: Large ribosomal subunit protein uL18 (120 aa).

This sequence belongs to the universal ribosomal protein uL18 family. In terms of assembly, part of the 50S ribosomal subunit; part of the 5S rRNA/L5/L18/L25 subcomplex. Contacts the 5S and 23S rRNAs.

In terms of biological role, this is one of the proteins that bind and probably mediate the attachment of the 5S RNA into the large ribosomal subunit, where it forms part of the central protuberance. This Bradyrhizobium sp. (strain ORS 278) protein is Large ribosomal subunit protein uL18.